The primary structure comprises 489 residues: Aspartyl/glutamyl-tRNA(Asn/Gln) amidotransferase subunit B (489 aa).

The protein belongs to the GatB/GatE family. GatB subfamily. As to quaternary structure, heterotrimer of A, B and C subunits.

The catalysed reaction is L-glutamyl-tRNA(Gln) + L-glutamine + ATP + H2O = L-glutaminyl-tRNA(Gln) + L-glutamate + ADP + phosphate + H(+). The enzyme catalyses L-aspartyl-tRNA(Asn) + L-glutamine + ATP + H2O = L-asparaginyl-tRNA(Asn) + L-glutamate + ADP + phosphate + 2 H(+). Allows the formation of correctly charged Asn-tRNA(Asn) or Gln-tRNA(Gln) through the transamidation of misacylated Asp-tRNA(Asn) or Glu-tRNA(Gln) in organisms which lack either or both of asparaginyl-tRNA or glutaminyl-tRNA synthetases. The reaction takes place in the presence of glutamine and ATP through an activated phospho-Asp-tRNA(Asn) or phospho-Glu-tRNA(Gln). The protein is Aspartyl/glutamyl-tRNA(Asn/Gln) amidotransferase subunit B of Polynucleobacter asymbioticus (strain DSM 18221 / CIP 109841 / QLW-P1DMWA-1) (Polynucleobacter necessarius subsp. asymbioticus).